The primary structure comprises 292 residues: Homoserine kinase (292 aa).

ATP is bound at residue 84-94 (PLSRGLGSSSA).

The protein belongs to the GHMP kinase family. Homoserine kinase subfamily.

It is found in the cytoplasm. The catalysed reaction is L-homoserine + ATP = O-phospho-L-homoserine + ADP + H(+). It functions in the pathway amino-acid biosynthesis; L-threonine biosynthesis; L-threonine from L-aspartate: step 4/5. Its function is as follows. Catalyzes the ATP-dependent phosphorylation of L-homoserine to L-homoserine phosphate. The sequence is that of Homoserine kinase from Campylobacter jejuni subsp. jejuni serotype O:23/36 (strain 81-176).